A 209-amino-acid polypeptide reads, in one-letter code: MRSRTSLLEQAALDWHPPGLVAGVDEAGRGPLAGPVVAAAVILDDLQPIAGLADSKVLTAARREKLYDEIRAKALCCSIAEASVEEIDQHNILQATMLAMRRAVLGLRLKPVRVLVDGNRLPPLDVPAEAIVKGDALVASISAASILAKVTRDRWCAQLHQQYPVYGFAGHKGYGTAEHLAALEVHGACPQHRRSFAPVARALQAPVAA.

In terms of domain architecture, RNase H type-2 spans 19 to 208 (GLVAGVDEAG…VARALQAPVA (190 aa)). A divalent metal cation-binding residues include Asp-25, Glu-26, and Asp-117.

The protein belongs to the RNase HII family. Requires Mn(2+) as cofactor. Mg(2+) is required as a cofactor.

The protein resides in the cytoplasm. It carries out the reaction Endonucleolytic cleavage to 5'-phosphomonoester.. Functionally, endonuclease that specifically degrades the RNA of RNA-DNA hybrids. The sequence is that of Ribonuclease HII from Acidovorax ebreus (strain TPSY) (Diaphorobacter sp. (strain TPSY)).